A 553-amino-acid polypeptide reads, in one-letter code: Arginine--tRNA ligase (553 aa).

A 'HIGH' region motif is present at residues 130–140 (ANPTGDLHIGH).

The protein belongs to the class-I aminoacyl-tRNA synthetase family. In terms of assembly, monomer.

The protein resides in the cytoplasm. The catalysed reaction is tRNA(Arg) + L-arginine + ATP = L-arginyl-tRNA(Arg) + AMP + diphosphate. The sequence is that of Arginine--tRNA ligase from Staphylococcus aureus (strain bovine RF122 / ET3-1).